Here is a 440-residue protein sequence, read N- to C-terminus: Cysteine proteinase (440 aa).

The first 60 residues, 1–60 (MYSSSVVSNPNERLVNNRVENDLESSDDTLSTQAKPVSRLLTRKLLLGVVVLFFLAGVSV), serve as a signal peptide directing secretion. Positions 61–229 (VSYFLFSKYK…DEDVDLAKLT (169 aa)) are cleaved as a propeptide — activation peptide. Residues 166–182 (VKGINRFSDLTEREFYK) form an involved in processing to yield active enzymes region. N206 carries N-linked (GlcNAc...) asparagine glycosylation. Cysteines 250 and 291 form a disulfide. Residues C253, H382, and N404 contribute to the active site.

This sequence belongs to the peptidase C1 family.

The sequence is that of Cysteine proteinase from Theileria parva (East coast fever infection agent).